We begin with the raw amino-acid sequence, 600 residues long: Xylulose kinase (600 aa).

79 to 82 (WLEA) provides a ligand contact to substrate. At Ser-244 the chain carries Phosphoserine. Asp-299 is a substrate binding site. ATP-binding positions include Gly-358 and 505–509 (GASKN).

It belongs to the FGGY kinase family.

Its subcellular location is the cytoplasm. The catalysed reaction is D-xylulose + ATP = D-xylulose 5-phosphate + ADP + H(+). Its function is as follows. Xylulose kinase necessary for growth in culture media with D-xylulose as the solecarbon source. The sequence is that of Xylulose kinase from Saccharomyces cerevisiae (strain ATCC 204508 / S288c) (Baker's yeast).